Here is a 106-residue protein sequence, read N- to C-terminus: UPF0213 protein VPA1222 (106 aa).

One can recognise a GIY-YIG domain in the interval 7 to 82; that stretch reads QHWSVYLIRN…KQLTKSKKEQ (76 aa).

It belongs to the UPF0213 family.

The protein is UPF0213 protein VPA1222 of Vibrio parahaemolyticus serotype O3:K6 (strain RIMD 2210633).